The chain runs to 225 residues: NAD(P)H-quinone oxidoreductase subunit K, chloroplastic (225 aa).

Positions 43, 44, 108, and 139 each coordinate [4Fe-4S] cluster.

It belongs to the complex I 20 kDa subunit family. In terms of assembly, NDH is composed of at least 16 different subunits, 5 of which are encoded in the nucleus. It depends on [4Fe-4S] cluster as a cofactor.

The protein resides in the plastid. Its subcellular location is the chloroplast thylakoid membrane. It carries out the reaction a plastoquinone + NADH + (n+1) H(+)(in) = a plastoquinol + NAD(+) + n H(+)(out). It catalyses the reaction a plastoquinone + NADPH + (n+1) H(+)(in) = a plastoquinol + NADP(+) + n H(+)(out). In terms of biological role, NDH shuttles electrons from NAD(P)H:plastoquinone, via FMN and iron-sulfur (Fe-S) centers, to quinones in the photosynthetic chain and possibly in a chloroplast respiratory chain. The immediate electron acceptor for the enzyme in this species is believed to be plastoquinone. Couples the redox reaction to proton translocation, and thus conserves the redox energy in a proton gradient. This chain is NAD(P)H-quinone oxidoreductase subunit K, chloroplastic, found in Lepidium virginicum (Virginia pepperweed).